The chain runs to 515 residues: MVKLSAEDLNDYLNPGVACVKPVKVQKKQDNQQNIKVNGESYYEVTKDTGEVEELGIASISLNDCLACSGCITSAESVLINLQSYHEVLKFVNAKEADDFFILQMSPQARASLAAYYNLSVQEVQLWIQSVFTNELKFNVVVDTGFSREISLRQAAIEFCQSWVAANAAKTVYNSKSGEVAPKPLPVLSSSCPGWICYVEKTHSSLIPHISTVRSPQQVAGRLLKDWFSYQLGISRKKIWVLSLMPCFDKKLEASRNDFVNEQVRDVDCVITPKELVELLKTKNISPQSMDLDSLSISEQTPCLPSWYEPVQFEQQNGSSSGGYLHYIMTFAAKALFDINDLTNRINVSQKNADMIEYELTSPDTGETLLRMATCYGFRNIQNLVRNVGRKSAPRRGRVLLKRMKNMSTSPSTGTGKQKLDYVEVMACPGGCINGGGQLPPPESSADFSGISREWMRQVEAHYFQPGVRQVDNAAVDAAVEHWLPSYSLQQSILHTKYHAVQNDTENPVALANTW.

[4Fe-4S] cluster is bound by residues Cys19, Cys65, Cys68, Cys71, Cys192, Cys247, Cys428, and Cys432.

Belongs to the NARF family.

Functionally, component of the cytosolic Fe/S protein assembly machinery. Required for maturation of extramitochondrial Fe/S proteins. May play a role in the transfer of pre-assembled Fe/S clusters to target apoproteins. In Schizosaccharomyces japonicus (strain yFS275 / FY16936) (Fission yeast), this protein is Cytosolic Fe-S cluster assembly factor NAR1 homolog.